The chain runs to 540 residues: uncharacterized protein (540 aa).

The transit peptide at Met1–Leu58 directs the protein to the chloroplast. Positions Tyr195–Asn533 constitute a Protein kinase domain. ATP contacts are provided by residues Ile201–Val209 and Lys224. The Proton acceptor role is filled by Asp362.

Belongs to the protein kinase superfamily. ADCK protein kinase family.

It localises to the plastid. The protein localises to the chloroplast. Its subcellular location is the plastoglobule. This is an uncharacterized protein from Arabidopsis thaliana (Mouse-ear cress).